Reading from the N-terminus, the 544-residue chain is Protein RDR1 (544 aa).

Residues 14 to 40 (CETCRELKRKCDGNQPCGACVRFEYDC) constitute a DNA-binding region (zn(2)-C6 fungal-type). The segment at 50–71 (KRRKTVEQDKEAPLPSPPVHVD) is disordered.

Its subcellular location is the nucleus. Functionally, may act as a transcriptional repressor of multidrug resistance genes. In Gibberella zeae (strain ATCC MYA-4620 / CBS 123657 / FGSC 9075 / NRRL 31084 / PH-1) (Wheat head blight fungus), this protein is Protein RDR1 (RDR1).